The primary structure comprises 196 residues: Small ribosomal subunit protein uS4c (196 aa).

The interval 16–36 (GTLPGLTSKRPKSGSDLKTQL) is disordered. The S4 RNA-binding domain occupies 89–150 (MRLDNILFRL…KQRSKALIQN (62 aa)).

This sequence belongs to the universal ribosomal protein uS4 family. Part of the 30S ribosomal subunit. Contacts protein S5. The interaction surface between S4 and S5 is involved in control of translational fidelity.

The protein resides in the plastid. The protein localises to the chloroplast. In terms of biological role, one of the primary rRNA binding proteins, it binds directly to 16S rRNA where it nucleates assembly of the body of the 30S subunit. With S5 and S12 plays an important role in translational accuracy. This chain is Small ribosomal subunit protein uS4c (rps4), found in Rhapis humilis (Slender lady palm).